The following is a 261-amino-acid chain: Class II histocompatibility antigen, M alpha chain (261 aa).

Positions 1–26 are cleaved as a signal peptide; it reads MEHEQKSGAVLLRLLRLLWLLPHSWA. Residues 27 to 124 form an alpha-1 region; that stretch reads VLEASTPVLW…KLEGQIPVSR (98 aa). The Lumenal portion of the chain corresponds to 27-231; the sequence is VLEASTPVLW…ALPSDLLENA (205 aa). The N-linked (GlcNAc...) asparagine glycan is linked to asparagine 41. 2 disulfides stabilise this stretch: cysteine 50/cysteine 105 and cysteine 147/cysteine 202. Positions 114 to 215 constitute an Ig-like C1-type domain; sequence PKLEGQIPVS…HEIDRYTAIA (102 aa). An alpha-2 region spans residues 125–217; the sequence is GLSVAEVFTL…IDRYTAIAYW (93 aa). The tract at residues 218–231 is connecting peptide; it reads VPQNALPSDLLENA. Residues 232–252 form a helical membrane-spanning segment; sequence LCGVAFALGVLGTIIGIVFFL. Residues 253–261 lie on the Cytoplasmic side of the membrane; that stretch reads CSQRPCSGD.

The protein belongs to the MHC class II family. Heterodimer of an alpha chain (DMA) and a beta chain (DMB). Interacts with MHCII; this interaction mediates rapid selection of high-affinity peptides.

Its subcellular location is the late endosome membrane. The protein resides in the lysosome membrane. Functionally, plays a critical role in catalyzing the release of class II-associated invariant chain peptide (CLIP) from newly synthesized MHC class II molecules and freeing the peptide binding site for acquisition of antigenic peptides. This Mus musculus (Mouse) protein is Class II histocompatibility antigen, M alpha chain (H2-DMa).